Consider the following 590-residue polypeptide: Guanylate-binding protein 5 (590 aa).

Residues 1 to 306 (MAPEIHMPEP…LTYVDAINSG (306 aa)) form an NLRP3-binding region. Residues 1–310 (MAPEIHMPEP…DAINSGALPS (310 aa)) are GTPase domain (Globular). The region spanning 35-277 (TQPVVVVAIV…FCSHIFTQSK (243 aa)) is the GB1/RHD3-type G domain. GTP is bound by residues 45–52 (GLYRTGKS), 67–69 (VGS), 182–183 (RD), and Leu246. Positions 529-590 (QIALEKARVA…RRHHHDCVIS (62 aa)) are required for tetramerization, but not for dimerization. Cys587 carries the cysteine methyl ester modification. A lipid anchor (S-geranylgeranyl cysteine) is attached at Cys587. The propeptide at 588-590 (VIS) is removed in mature form.

It belongs to the TRAFAC class dynamin-like GTPase superfamily. GB1/RHD3 GTPase family. GB1 subfamily. As to quaternary structure, homodimer; homodimerizes upon GTP-binding, forming a close face-to-face dimer. Heterodimer with other family members, including GBP1, GBP2, GBP3 and GBP4. May also form tetramers (dimer of dimers) in the presence of GTP. Interacts with NLRP3, possibly in its tetrameric form, and promotes PYCARD/ASC polymerization. In terms of processing, isoprenylation is required for proper subcellular location. Low expression, if any, in many tissues in the absence of stimulation.

The protein resides in the cytoplasmic vesicle membrane. It localises to the golgi apparatus membrane. It is found in the cytoplasm. It carries out the reaction GTP + H2O = GDP + phosphate + H(+). Interferon (IFN)-inducible GTPase that plays important roles in innate immunity against a diverse range of bacterial, viral and protozoan pathogens. Hydrolyzes GTP, but in contrast to other family members, does not produce GMP. Following infection, recruited to the pathogen-containing vacuoles or vacuole-escaped bacteria and acts as a positive regulator of inflammasome assembly by promoting the release of inflammasome ligands from bacteria. Acts by promoting lysis of pathogen-containing vacuoles, releasing pathogens into the cytosol. Following pathogen release in the cytosol, promotes recruitment of proteins that mediate bacterial cytolysis, such as Gm12250/Irgb10: this liberates ligands that are detected by inflammasomes, such as lipopolysaccharide (LPS) that activates the non-canonical CASP4/CASP11 inflammasome or double-stranded DNA (dsDNA) that activates the AIM2 inflammasome. As an activator of NLRP3 inflammasome assembly: promotes selective NLRP3 inflammasome assembly in response to microbial and soluble, but not crystalline, agents. Independently of its GTPase activity, acts as an inhibitor of various viruses infectivity by inhibiting FURIN-mediated maturation of viral envelope proteins. The sequence is that of Guanylate-binding protein 5 from Mus musculus (Mouse).